The sequence spans 79 residues: ATP synthase subunit c (79 aa).

Transmembrane regions (helical) follow at residues 11–31 (IAVA…IGIL) and 59–79 (LVDA…FAVI).

Belongs to the ATPase C chain family. As to quaternary structure, F-type ATPases have 2 components, F(1) - the catalytic core - and F(0) - the membrane proton channel. F(1) has five subunits: alpha(3), beta(3), gamma(1), delta(1), epsilon(1). F(0) has three main subunits: a(1), b(2) and c(10-14). The alpha and beta chains form an alternating ring which encloses part of the gamma chain. F(1) is attached to F(0) by a central stalk formed by the gamma and epsilon chains, while a peripheral stalk is formed by the delta and b chains.

The protein localises to the cell membrane. F(1)F(0) ATP synthase produces ATP from ADP in the presence of a proton or sodium gradient. F-type ATPases consist of two structural domains, F(1) containing the extramembraneous catalytic core and F(0) containing the membrane proton channel, linked together by a central stalk and a peripheral stalk. During catalysis, ATP synthesis in the catalytic domain of F(1) is coupled via a rotary mechanism of the central stalk subunits to proton translocation. Functionally, key component of the F(0) channel; it plays a direct role in translocation across the membrane. A homomeric c-ring of between 10-14 subunits forms the central stalk rotor element with the F(1) delta and epsilon subunits. This chain is ATP synthase subunit c, found in Buchnera aphidicola subsp. Baizongia pistaciae (strain Bp).